A 1476-amino-acid chain; its full sequence is Membrane-associated guanylate kinase, WW and PDZ domain-containing protein 3 (1476 aa).

In terms of domain architecture, PDZ 1 spans 18-108; that stretch reads CAVSWAGPPG…PIRLKTVKPG (91 aa). The interaction with ADRB1 and TGFA stretch occupies residues 18-108; sequence CAVSWAGPPG…PIRLKTVKPG (91 aa). The Guanylate kinase-like domain maps to 116–290; it reads RHYLSLQFQK…SSMDFRNYMM (175 aa). 123-130 provides a ligand contact to ATP; it reads FQKGSIDH. A disordered region spans residues 184 to 266; the sequence is TYDGNFYGTP…ETREMHSETS (83 aa). The span at 193–204 shows a compositional bias: pro residues; the sequence is PKPPAEPSPFQP. Residue Ser236 is modified to Phosphoserine. Residues 238–247 show a composition bias toward acidic residues; it reads LPEEEEDEDK. WW domains are found at residues 296–329 and 342–375; these read EPLP…DPRL and GELP…NPVE. The 83-residue stretch at 413-495 folds into the PDZ 2 domain; sequence RASLKKSTMG…NQYVNLTLCR (83 aa). Residues 413–495 are interaction with PTEN; sequence RASLKKSTMG…NQYVNLTLCR (83 aa). The interval 551-575 is disordered; the sequence is LASDRLNGPSESSEQRASLASSGSS. Over residues 559–575 the composition is skewed to polar residues; it reads PSESSEQRASLASSGSS. Residues 581 to 657 form the PDZ 3 domain; the sequence is TIPLIKGPKG…GADVPLLILR (77 aa). Position 598 is a phosphoserine (Ser598). The interval 664–691 is disordered; sequence TKTAKTKTDTKENSGSLETINEPIPQPM. Ser702 carries the post-translational modification Phosphoserine. Positions 729–811 constitute a PDZ 4 domain; sequence DVFLRKQESG…NGHVLLTVRR (83 aa). Residues 729–811 are interaction with ADGRB1; it reads DVFLRKQESG…NGHVLLTVRR (83 aa). Residues 818–844 form a disordered region; that stretch reads KQPEDESHQAFSQNGSPRLNRAELPTR. Phosphoserine is present on residues Ser833 and Ser916. The PDZ 5 domain occupies 852–939; that stretch reads DVTLQRKENE…TVTLTVVAEE (88 aa). Residues 852-939 are interaction with LPAR2 and GRIN2B; the sequence is DVTLQRKENE…TVTLTVVAEE (88 aa). The tract at residues 939-966 is disordered; sequence EEHHGPPSGTNSARQSPALQHRPMGQAQ. The span at 946–956 shows a compositional bias: polar residues; it reads SGTNSARQSPA. The 83-residue stretch at 1022–1104 folds into the PDZ 6 domain; the sequence is PVELERGPRG…KVLLLLRPGT (83 aa). Disordered regions lie at residues 1109–1151 and 1168–1476; these read DHGD…ATED and TVQE…DKQL. Polar residues predominate over residues 1114–1123; sequence DTNSPSSSNV. Composition is skewed to basic and acidic residues over residues 1193 to 1211 and 1230 to 1265; these read SKKD…RLKG and RHSE…ESKG. Over residues 1285 to 1304 the composition is skewed to polar residues; sequence SSSPKKQQKIGGNSLSNTEG. 2 stretches are compositionally biased toward basic and acidic residues: residues 1317–1340 and 1350–1361; these read HPRD…KDLK and KSPEKKSSKVDE. Ser1321 bears the Phosphoserine mark. A compositionally biased stretch (polar residues) spans 1363–1373; it reads SLPSKKTSSTA. Over residues 1419 to 1437 the composition is skewed to basic and acidic residues; sequence ADDHKGRESEVTDRCRERA.

The protein belongs to the MAGUK family. As to quaternary structure, interacts with ADRB1, ADGRB1, LPAR2/EDG4, GRIN2B, PTEN, and PTPRB. Interacts with unidentified tyrosine phosphorylated proteins. Interacts with FZD4, FZD7, TGFA and VANGL2. Interacts with DLL1. Interacts with PRRG4 (via cytoplasmic domain). Widely expressed. Colocalizes with TGFA in neurons in the cortex and dentate gyrus, as well as in ependymal cells and some astrocytes (at protein level). Present in lens epithelium.

The protein resides in the cell membrane. The protein localises to the cell junction. Its subcellular location is the tight junction. It is found in the nucleus. Its function is as follows. Acts as a scaffolding protein at cell-cell junctions, thereby regulating various cellular and signaling processes. Cooperates with PTEN to modulate the kinase activity of AKT1. Its interaction with PTPRB and tyrosine phosphorylated proteins suggests that it may link receptor tyrosine phosphatase with its substrates at the plasma membrane. In polarized epithelial cells, involved in efficient trafficking of TGFA to the cell surface. Regulates the ability of LPAR2 to activate ERK and RhoA pathways. Regulates the JNK signaling cascade via its interaction with FZD4 and VANGL2. The chain is Membrane-associated guanylate kinase, WW and PDZ domain-containing protein 3 (Magi3) from Mus musculus (Mouse).